Reading from the N-terminus, the 310-residue chain is MKTVKILDSHTGGEPTRLVLEGFPDLGTGDMESRRKILSEQYDHFRRATMLEPRGNDVLVGALLCKPVNPKASAGVIFFNNTGYLGMCGHGTIGLVASLAHLGKIQVGTHLIETPVGDVEATLHEDHSVSVRNVPAYRYKKAVEVDVEKYGKVTGDIAWGGNWFFLINDHGQRVASDNLDQLTEYAWTVRQALTAQGITGKDGQEIDHIELFASDTEADSKNFVLCPGKAYDRSPCGTGTSAKIACLAADGKLEPGKLWKQASIIGSQFIASYEQAGEYVIPTIRGEAYMSAEATLFMDENDPFAWGIQL.

The active-site Proton acceptor is the cysteine 88. Substrate contacts are provided by residues 89–90 (GH), histidine 208, and aspartate 232. Catalysis depends on cysteine 236, which acts as the Proton donor. 237–238 (GT) serves as a coordination point for substrate.

This sequence belongs to the proline racemase family.

It carries out the reaction trans-4-hydroxy-L-proline = cis-4-hydroxy-D-proline. Functionally, catalyzes the epimerization of trans-4-hydroxy-L-proline (t4LHyp) to cis-4-hydroxy-D-proline (c4DHyp). Is likely involved in a degradation pathway that converts t4LHyp to alpha-ketoglutarate. Displays no proline racemase activity. This chain is 4-hydroxyproline 2-epimerase, found in Acinetobacter baumannii (strain ATCC 17978 / DSM 105126 / CIP 53.77 / LMG 1025 / NCDC KC755 / 5377).